A 253-amino-acid chain; its full sequence is MRVSQTYGLVLYNRNYREDDKLVKIFTETEGKRMFFVKHASKSKFNAVLQPLTIAHFILKINDNGLSYIDDYKEVLAFQEINSDLFKLSYASYITSLADVAISDNVADAQLFIFLKKTLELIEDGLDYEILTNIFEVQLLERFGVALNFHDCVFCHRAGLPFDFSHKYSGLLCPNHYYKDERRNHLDPNMLHLINRFQSIQFDDLQTISVKPEMKLKIRQFLDMIYDEYVGIHLKSKKFIDDLSSWGSIMKSD.

This sequence belongs to the RecO family.

Its function is as follows. Involved in DNA repair and RecF pathway recombination. This Streptococcus agalactiae serotype Ia (strain ATCC 27591 / A909 / CDC SS700) protein is DNA repair protein RecO.